The chain runs to 496 residues: tRNA-2-methylthio-N(6)-dimethylallyladenosine synthase (496 aa).

Residues 10 to 126 (RTYEVRTYGC…LPALLERARV (117 aa)) enclose the MTTase N-terminal domain. Positions 19, 55, 89, 163, 167, and 170 each coordinate [4Fe-4S] cluster. The Radical SAM core domain maps to 149–380 (RESAYAAWVS…ALVNEIAWEE (232 aa)). The TRAM domain occupies 382-451 (KRLVGRRVEL…PHHLVADGPV (70 aa)). Residues 465-496 (ARNAAPAPSSGVTLGMPTVGAPAPLPDAPACR) are disordered. The span at 487 to 496 (APLPDAPACR) shows a compositional bias: pro residues.

Belongs to the methylthiotransferase family. MiaB subfamily. As to quaternary structure, monomer. It depends on [4Fe-4S] cluster as a cofactor.

It is found in the cytoplasm. It carries out the reaction N(6)-dimethylallyladenosine(37) in tRNA + (sulfur carrier)-SH + AH2 + 2 S-adenosyl-L-methionine = 2-methylsulfanyl-N(6)-dimethylallyladenosine(37) in tRNA + (sulfur carrier)-H + 5'-deoxyadenosine + L-methionine + A + S-adenosyl-L-homocysteine + 2 H(+). In terms of biological role, catalyzes the methylthiolation of N6-(dimethylallyl)adenosine (i(6)A), leading to the formation of 2-methylthio-N6-(dimethylallyl)adenosine (ms(2)i(6)A) at position 37 in tRNAs that read codons beginning with uridine. The polypeptide is tRNA-2-methylthio-N(6)-dimethylallyladenosine synthase (Nocardioides sp. (strain ATCC BAA-499 / JS614)).